Reading from the N-terminus, the 953-residue chain is Eukaryotic translation initiation factor 3 subunit A (953 aa).

The PCI domain maps to 323–504 (LQKMASHVLL…KSISFGLDLH (182 aa)). 3 coiled-coil regions span residues 593–642 (QERE…KRQA), 670–704 (MNAD…VDYF), and 732–877 (ENQE…LEER). The disordered stretch occupies residues 603–623 (IKKQKVENQEAEQKRLDEERR). Disordered stretches follow at residues 810-861 (ERKK…EIDR) and 893-953 (GWGD…ITMS). Composition is skewed to basic and acidic residues over residues 812 to 861 (KKIE…EIDR), 895 to 919 (GDHE…RGGD), and 928 to 953 (WQRE…ITMS).

It belongs to the eIF-3 subunit A family. As to quaternary structure, component of the eukaryotic translation initiation factor 3 (eIF-3) complex.

Its subcellular location is the cytoplasm. In terms of biological role, RNA-binding component of the eukaryotic translation initiation factor 3 (eIF-3) complex, which is involved in protein synthesis of a specialized repertoire of mRNAs and, together with other initiation factors, stimulates binding of mRNA and methionyl-tRNAi to the 40S ribosome. The eIF-3 complex specifically targets and initiates translation of a subset of mRNAs involved in cell proliferation. The chain is Eukaryotic translation initiation factor 3 subunit A from Nematostella vectensis (Starlet sea anemone).